We begin with the raw amino-acid sequence, 861 residues long: Protein argonaute-4 (861 aa).

The PAZ domain occupies 219–338 (PIIEFMCEVL…LPLEVCNIVA (120 aa)). The Piwi domain occupies 509–820 (LIVVILPGKT…VAFRARYHLV (312 aa)). Residues 825-846 (DSAEGSHVSGQSNGRDPQALAK) form a disordered region.

Belongs to the argonaute family. Ago subfamily. As to quaternary structure, interacts with EIF4B, IMP8, PRMT5, TNRC6A and TNRC6B. Interacts with ZFP36. In terms of processing, ubiquitinated on surface-exposed lysines by a SCF-like E3 ubiquitin-protein ligase complex containing ZSWIM8 during target-directed microRNA degradation (TDMD), a process that mediates degradation of microRNAs (miRNAs). Ubiquitination by the SCF-like E3 ubiquitin-protein ligase complex containing ZSWIM8 leads to its subsequent degradation, thereby exposing miRNAs for degradation. ZSWIM8 recognizes and binds AGO4 when it is engaged with a TDMD target.

It localises to the cytoplasm. It is found in the P-body. Required for RNA-mediated gene silencing (RNAi). Binds to short RNAs such as microRNAs (miRNAs) and represses the translation of mRNAs which are complementary to them. Lacks endonuclease activity and does not appear to cleave target mRNAs. This is Protein argonaute-4 (Ago4) from Mus musculus (Mouse).